Here is a 212-residue protein sequence, read N- to C-terminus: MKLQLQCFLINDLEKYNCINVSVSDKVFGYPFNPALIHQIVSSYLINCRQGSKSQKSRSDVSGSNKKPWRQKGTGRARSGSVKSPIWRSGGVTFASKPKKYDQKINKKMYKGAMKSILSKLVCDNRLFLIEDLFLEKPKTNLLLKKLKNITSDRSVLIVTDNVIDKNLILASSNLHTVKIYNLNSIDPVSLINFNITLLFRTIVESLELRLS.

Positions 54–65 (SQKSRSDVSGSN) are enriched in polar residues. A disordered region spans residues 54 to 85 (SQKSRSDVSGSNKKPWRQKGTGRARSGSVKSP).

The protein belongs to the universal ribosomal protein uL4 family. Part of the 50S ribosomal subunit.

In terms of biological role, one of the primary rRNA binding proteins, this protein initially binds near the 5'-end of the 23S rRNA. It is important during the early stages of 50S assembly. It makes multiple contacts with different domains of the 23S rRNA in the assembled 50S subunit and ribosome. Forms part of the polypeptide exit tunnel. This Blochmanniella floridana protein is Large ribosomal subunit protein uL4.